Here is a 351-residue protein sequence, read N- to C-terminus: DNA polymerase IV (351 aa).

A UmuC domain is found at Ile4–Gly185. Residues Asp8 and Asp103 each coordinate Mg(2+). Glu104 is a catalytic residue.

The protein belongs to the DNA polymerase type-Y family. Monomer. It depends on Mg(2+) as a cofactor.

The protein localises to the cytoplasm. It carries out the reaction DNA(n) + a 2'-deoxyribonucleoside 5'-triphosphate = DNA(n+1) + diphosphate. Its function is as follows. Poorly processive, error-prone DNA polymerase involved in untargeted mutagenesis. Copies undamaged DNA at stalled replication forks, which arise in vivo from mismatched or misaligned primer ends. These misaligned primers can be extended by PolIV. Exhibits no 3'-5' exonuclease (proofreading) activity. May be involved in translesional synthesis, in conjunction with the beta clamp from PolIII. The protein is DNA polymerase IV of Photorhabdus laumondii subsp. laumondii (strain DSM 15139 / CIP 105565 / TT01) (Photorhabdus luminescens subsp. laumondii).